Reading from the N-terminus, the 566-residue chain is Oxygen-dependent choline dehydrogenase (566 aa).

7-36 provides a ligand contact to FAD; the sequence is DYIICGAGSAGNVLATRLTEDPNVTVLLLE. Positions 180-203 are disordered; it reads NGYQQEGFGPMDRTVTPKGRRAST. Histidine 474 acts as the Proton acceptor in catalysis.

Belongs to the GMC oxidoreductase family. FAD serves as cofactor.

It carries out the reaction choline + A = betaine aldehyde + AH2. It catalyses the reaction betaine aldehyde + NAD(+) + H2O = glycine betaine + NADH + 2 H(+). Its pathway is amine and polyamine biosynthesis; betaine biosynthesis via choline pathway; betaine aldehyde from choline (cytochrome c reductase route): step 1/1. Its function is as follows. Involved in the biosynthesis of the osmoprotectant glycine betaine. Catalyzes the oxidation of choline to betaine aldehyde and betaine aldehyde to glycine betaine at the same rate. The polypeptide is Oxygen-dependent choline dehydrogenase (Burkholderia ambifaria (strain MC40-6)).